A 1201-amino-acid chain; its full sequence is Potassium channel subfamily T member 1 (1201 aa).

The disordered stretch occupies residues 1-28 (MARAKLKNSPSESNSHVKTVPPATTEDV). Residues 1-92 (MARAKLKNSP…FFIKNQRSSL (92 aa)) are Cytoplasmic-facing. Over residues 8 to 17 (NSPSESNSHV) the composition is skewed to polar residues. A helical transmembrane segment spans residues 93 to 115 (RIRLFNFSLKLLTCLLYIVRVLL). Residues 116–152 (DNPEEGIGCWECEKQNYTLFNQSTKINWSHIFWVDRK) are Extracellular-facing. N-linked (GlcNAc...) asparagine glycans are attached at residues N131 and N136. The helical transmembrane segment at 153-175 (LPLWAVQVSIALISFLETMLLIY) threads the bilayer. Over 176-184 (LSYKGNIWE) the chain is Cytoplasmic. Residues 185–206 (QIFRISFILEMINTVPFIITIF) form a helical membrane-spanning segment. Residues 207 to 216 (WPPLRNLFIP) lie on the Extracellular side of the membrane. Residues 217-229 (VFLNCWLAKYALE) form a helical membrane-spanning segment. Residues 230–249 (NMINDLHRAIQRTQSAMFNQ) are Cytoplasmic-facing. Residues 250–272 (VLILICTLLCLVFTGTCGIQHLE) form a helical membrane-spanning segment. Residues 273–279 (RAGEKLS) lie on the Extracellular side of the membrane. The segment at residues 280–300 (LFKSFYFCIVTFSTVGYGDVT) is an intramembrane region (pore-forming). 2 residues coordinate K(+): V294 and G295. Residues 301–304 (PKIW) lie on the Extracellular side of the membrane. The chain crosses the membrane as a helical span at residues 305-326 (PSQLLVVIMICVALVVLPLQFE). The Cytoplasmic segment spans residues 327 to 1201 (ELVYLWMERQ…NPETRDETQL (875 aa)). In terms of domain architecture, RCK N-terminal 1 spans 350–486 (EKHVVLCVSS…FHVKFADHVV (137 aa)). The Na(+) site is built by L511, H514, S536, and N538. 2 residues coordinate Zn(2+): C750 and C751. Residues R753 and K756 each coordinate K(+). Na(+) is bound by residues R753 and K756. Zn(2+) is bound by residues C758 and H760. Residues N761, Y769, and G770 each contribute to the K(+) site. Residue F771 coordinates Na(+). The 141-residue stretch at 773-913 (NKLIIVSAET…QFRAKDSYSL (141 aa)) folds into the RCK N-terminal 2 domain. 5 residues coordinate K(+): S779, L810, D812, G834, and D857. Positions 1175–1201 (NDGHSRKSSCSNKLGPCNPETRDETQL) are disordered.

This sequence belongs to the potassium channel family. Calcium-activated (TC 1.A.1.3) subfamily. KCa4.1/KCNT1 sub-subfamily. In terms of assembly, homotetramer; which constitutes the Na(+)-activated K(+) channel. Interacts with KCNT2; these heterodimer channels differ from the homomers in their unitary conductance, kinetic behavior, subcellular localization, and response to activation of protein kinase C. Phosphorylated by protein kinase C. Phosphorylation of the C-terminal domain increases channel activity.

The protein resides in the cell membrane. It catalyses the reaction K(+)(in) = K(+)(out). With respect to regulation, activated by high intracellular Na(+). In addition to activation by Na(+), is cooperatively activated by intracellular Cl(-) levels. Inhibited by Zn(2+). Activated upon stimulation of G-protein coupled receptors, such as CHRM1 and GRIA1. Functionally, sodium-activated K(+) channel. Acts as an important mediator of neuronal membrane excitability. Contributes to the delayed outward currents. Regulates of neuronal bursting in sensory neurons. Contributes to synaptic development and plasticity. This Gallus gallus (Chicken) protein is Potassium channel subfamily T member 1 (KCNT1).